Here is a 309-residue protein sequence, read N- to C-terminus: Taste receptor type 2 member 8 (309 aa).

The Extracellular segment spans residues 1–7 (MFSPADN). The chain crosses the membrane as a helical span at residues 8-28 (IFIILITGEFILGILGNGYIA). At 29–50 (LVNWIDWIKKKKISTVDYILTN) the chain is on the cytoplasmic side. A helical transmembrane segment spans residues 51-71 (LVIARICLISVMVVNGIVIVL). The Extracellular portion of the chain corresponds to 72–82 (NPDVYTKNKQQ). Residues 83–103 (IVIFTFWTFANYLNMWITTCL) form a helical membrane-spanning segment. The Cytoplasmic segment spans residues 104–131 (NVFYFLKIASSSHPLFLWLKWKIDMVVH). The helical transmembrane segment at 132-152 (WILLGCFAISLLVSLIAAIVL) threads the bilayer. Topologically, residues 153 to 184 (SCDYRFHAIAKHKRNITEMFHVSKIPYFEPLT) are extracellular. Asn-167 carries an N-linked (GlcNAc...) asparagine glycan. A helical membrane pass occupies residues 185–205 (LFNLFAIVPFIVSLISFFLLV). Residues 206–239 (RSLWRHTKQIKLYATGSRDPSTEVHVRAIKTMTS) are Cytoplasmic-facing. The helical transmembrane segment at 240–260 (FIFFFFLYYISSILMTFSYLM) threads the bilayer. At 261 to 266 (TKYKLA) the chain is on the extracellular side. A helical transmembrane segment spans residues 267 to 287 (VEFGEIAAILYPLGHSLILIV). At 288–309 (LNNKLRQTFVRMLTCRKIACMI) the chain is on the cytoplasmic side.

It belongs to the G-protein coupled receptor T2R family. In terms of tissue distribution, expressed in subsets of taste receptor cells of the tongue and palate epithelium and exclusively in gustducin-positive cells.

It is found in the membrane. Functionally, receptor that may play a role in the perception of bitterness and is gustducin-linked. May play a role in sensing the chemical composition of the gastrointestinal content. The activity of this receptor may stimulate alpha gustducin, mediate PLC-beta-2 activation and lead to the gating of TRPM5. The chain is Taste receptor type 2 member 8 (TAS2R8) from Homo sapiens (Human).